The sequence spans 155 residues: SsrA-binding protein (155 aa).

Residues 135 to 155 (KRESLKRRQDQRDIQRAMKNY) are disordered.

This sequence belongs to the SmpB family.

It localises to the cytoplasm. Required for rescue of stalled ribosomes mediated by trans-translation. Binds to transfer-messenger RNA (tmRNA), required for stable association of tmRNA with ribosomes. tmRNA and SmpB together mimic tRNA shape, replacing the anticodon stem-loop with SmpB. tmRNA is encoded by the ssrA gene; the 2 termini fold to resemble tRNA(Ala) and it encodes a 'tag peptide', a short internal open reading frame. During trans-translation Ala-aminoacylated tmRNA acts like a tRNA, entering the A-site of stalled ribosomes, displacing the stalled mRNA. The ribosome then switches to translate the ORF on the tmRNA; the nascent peptide is terminated with the 'tag peptide' encoded by the tmRNA and targeted for degradation. The ribosome is freed to recommence translation, which seems to be the essential function of trans-translation. The sequence is that of SsrA-binding protein from Trichormus variabilis (strain ATCC 29413 / PCC 7937) (Anabaena variabilis).